The following is a 353-amino-acid chain: Photosystem II protein D1 (353 aa).

Thr-2 carries the post-translational modification N-acetylthreonine. Thr-2 is modified (phosphothreonine). Transmembrane regions (helical) follow at residues 29–46 (YIGWFGVLMIPTLLTATS), 118–133 (HFLLGVACYMGREWEL), and 142–156 (WIAVAYSAPVAAATA). His-118 lines the chlorophyll a pocket. Tyr-126 lines the pheophytin a pocket. Residues Asp-170 and Glu-189 each contribute to the [CaMn4O5] cluster site. The helical transmembrane segment at 197–218 (FHMLGVAGVFGGSLFSAMHGSL) threads the bilayer. Residue His-198 participates in chlorophyll a binding. A quinone is bound by residues His-215 and 264–265 (SF). Fe cation is bound at residue His-215. His-272 is a binding site for Fe cation. Residues 274-288 (FLAAWPVAGIWFTAL) traverse the membrane as a helical segment. Residues His-332, Glu-333, Asp-342, and Ala-344 each coordinate [CaMn4O5] cluster. The propeptide occupies 345–353 (AVESISIGG).

It belongs to the reaction center PufL/M/PsbA/D family. As to quaternary structure, PSII is composed of 1 copy each of membrane proteins PsbA, PsbB, PsbC, PsbD, PsbE, PsbF, PsbH, PsbI, PsbJ, PsbK, PsbL, PsbM, PsbT, PsbX, PsbY, PsbZ, Psb30/Ycf12, at least 3 peripheral proteins of the oxygen-evolving complex and a large number of cofactors. It forms dimeric complexes. The D1/D2 heterodimer binds P680, chlorophylls that are the primary electron donor of PSII, and subsequent electron acceptors. It shares a non-heme iron and each subunit binds pheophytin, quinone, additional chlorophylls, carotenoids and lipids. D1 provides most of the ligands for the Mn4-Ca-O5 cluster of the oxygen-evolving complex (OEC). There is also a Cl(-1) ion associated with D1 and D2, which is required for oxygen evolution. The PSII complex binds additional chlorophylls, carotenoids and specific lipids. serves as cofactor. Post-translationally, tyr-161 forms a radical intermediate that is referred to as redox-active TyrZ, YZ or Y-Z. C-terminally processed by CTPA; processing is essential to allow assembly of the oxygen-evolving complex and thus photosynthetic growth.

It is found in the plastid. The protein resides in the chloroplast thylakoid membrane. It carries out the reaction 2 a plastoquinone + 4 hnu + 2 H2O = 2 a plastoquinol + O2. Photosystem II (PSII) is a light-driven water:plastoquinone oxidoreductase that uses light energy to abstract electrons from H(2)O, generating O(2) and a proton gradient subsequently used for ATP formation. It consists of a core antenna complex that captures photons, and an electron transfer chain that converts photonic excitation into a charge separation. The D1/D2 (PsbA/PsbD) reaction center heterodimer binds P680, the primary electron donor of PSII as well as several subsequent electron acceptors. This is Photosystem II protein D1 from Pinus contorta (Shore pine).